A 784-amino-acid polypeptide reads, in one-letter code: Transcription factor kayak (784 aa).

3 stretches are compositionally biased toward low complexity: residues 97-106 (QPTQSAYQQQ), 115-126 (NNNNNSNNNANM), and 198-227 (QQQQQSQQQQQSQQQQQSQQQQQSQQQQQQ). Disordered stretches follow at residues 97–126 (QPTQSAYQQQNAKQSYGHNNNNNSNNNANM), 196–231 (YNQQQQQSQQQQQSQQQQQSQQQQQSQQQQQQHLPT), 358–404 (PGSD…GNGS), and 421–464 (SGRG…KRRI). Residues 365–378 (SNGSWNEGQLNDDQ) show a composition bias toward polar residues. Residues 380 to 397 (TTDTSSAATDSTSYQNGG) show a composition bias toward low complexity. Polar residues predominate over residues 421–438 (SGRGSGLAANSTTSNSAT). A bZIP domain is found at 459–522 (EEKRRIRRER…SQLEYVLQTH (64 aa)). Positions 461-463 (KRR) are basic motif. The segment at 464–471 (IRRERNKL) is leucine-zipper. Phosphoserine is present on Ser594. Disordered stretches follow at residues 616–635 (QDGAIDSGSSLDQDGPTPAK) and 759–784 (PTCSSQNKHPLELPTPTSEPSKLVSL).

Belongs to the bZIP family. Fos subfamily. Homodimer. Heterodimer with Jra. The kay-Jra heterodimer binds more stably to the AP-1 site than either of the two proteins alone.

It localises to the nucleus. Its function is as follows. Developmentally regulated transcription factor AP-1 binds and recognizes the enhancer DNA sequence: 5'-TGA[CG]TCA-3'. May play a role in the function or determination of a particular subset of cells in the developing embryo. It is able to carry out its function either independently of or in conjunction with Jra. The chain is Transcription factor kayak from Drosophila mojavensis (Fruit fly).